Reading from the N-terminus, the 1196-residue chain is Phosphoglucan, water dikinase, chloroplastic (1196 aa).

A chloroplast-targeting transit peptide spans 1-54; that stretch reads MESIGSHCCSSPFTFITRNSSSSLPRLVNITHRVNLSHQSHRLRNSNSRLTCTA. At Thr-55 the chain carries N-acetylthreonine. The CBM20 domain maps to 66–166; the sequence is KKDGSGTKVR…NFSVVCHWDA (101 aa). A disordered region spans residues 174-200; it reads PQEVGNDDDVGDGGHERDNHDVGDDRV. Residues 185–200 are compositionally biased toward basic and acidic residues; it reads DGGHERDNHDVGDDRV. The Tele-phosphohistidine intermediate role is filled by His-759. The segment at 804–855 is disordered; that stretch reads LSTEGRSRTSKSSATKKTDKNSLSKKKTDKKSLSIDDEESKPGSSSSNSLLY.

This sequence belongs to the PEP-utilizing enzyme family. In terms of assembly, homodimer. Mg(2+) is required as a cofactor. As to expression, in all starch containing tissues (e.g. roots, leaves, stems, inflorescence and siliques).

The protein resides in the plastid. It localises to the chloroplast. The catalysed reaction is [(1-&gt;4)-6-phospho-alpha-D-glucosyl](n) + n ATP + n H2O = [(1-&gt;4)-3,6-bisphospho-alpha-D-glucosyl](n) + n AMP + n phosphate + 2n H(+). Functionally, mediates the incorporation of phosphate into starch-like phospho-alpha-glucan, mostly at the C-3 position of glucose units. Required for starch degradation, suggesting that the phosphate content of starch regulates its degradability. In Arabidopsis thaliana (Mouse-ear cress), this protein is Phosphoglucan, water dikinase, chloroplastic (GWD3).